Here is a 256-residue protein sequence, read N- to C-terminus: CCAAT/enhancer-binding protein delta (256 aa).

N-acetylserine is present on Ser2. Disordered regions lie at residues 18–40 (TAEP…AEPA), 92–121 (GGPA…APGS), and 139–206 (AAAQ…NQEM). Residue Lys108 forms a Glycyl lysine isopeptide (Lys-Gly) (interchain with G-Cter in SUMO) linkage. Residues 143-162 (PTPPASPEPPRRSPAPPAPG) are compositionally biased toward pro residues. Basic and acidic residues predominate over residues 164 to 188 (ARDKAAGKRGPDRGSPEYRQRRERN). One can recognise a bZIP domain in the interval 178–241 (SPEYRQRRER…AGLRRFFKQL (64 aa)). Positions 182–209 (RQRRERNNIAVRKSRDKAKRRNQEMQQK) are basic motif. Positions 213–241 (LSAENEKLQQRVEQLTRDLAGLRRFFKQL) are leucine-zipper.

Belongs to the bZIP family. C/EBP subfamily. As to quaternary structure, binds DNA as a homodimer and as a heterodimer. Can form stable heterodimers with CEBPB. Can form stable heterodimers with CEBPA and CEBPE. Directly interacts with SPI1/PU.1; this interaction does not affect DNA-binding properties of each partner. Interacts with PRDM16.

It is found in the nucleus. Functionally, transcription activator that recognizes two different DNA motifs: the CCAAT homology common to many promoters and the enhanced core homology common to many enhancers. Important transcription factor regulating the expression of genes involved in immune and inflammatory responses. Transcriptional activator that enhances IL6 transcription alone and as heterodimer with CEBPB. The protein is CCAAT/enhancer-binding protein delta (CEBPD) of Bos taurus (Bovine).